The primary structure comprises 68 residues: Large ribosomal subunit protein bL35 (68 aa).

Basic residues-rich tracts occupy residues 1 to 15 and 23 to 38; these read MPKM…KRFK and TARK…HKSS. The disordered stretch occupies residues 1-38; the sequence is MPKMKSHSGTKKRFKVTGSGKVTARKAGKRHLNEHKSS.

This sequence belongs to the bacterial ribosomal protein bL35 family.

The protein is Large ribosomal subunit protein bL35 of Cutibacterium acnes (strain DSM 16379 / KPA171202) (Propionibacterium acnes).